The sequence spans 703 residues: Putative glycosyl hydrolase ecdE (703 aa).

Residues M1–A21 form the signal peptide. D47 is a catalytic residue. N-linked (GlcNAc...) asparagine glycans are attached at residues N104, N120, N293, N397, N443, and N641.

It belongs to the glycosyl hydrolase 32 family.

The polypeptide is Putative glycosyl hydrolase ecdE (Aspergillus rugulosus (Emericella rugulosa)).